A 403-amino-acid polypeptide reads, in one-letter code: Tryptophan synthase beta chain (403 aa).

Position 93 is an N6-(pyridoxal phosphate)lysine (Lys93).

Belongs to the TrpB family. In terms of assembly, tetramer of two alpha and two beta chains. Requires pyridoxal 5'-phosphate as cofactor.

It carries out the reaction (1S,2R)-1-C-(indol-3-yl)glycerol 3-phosphate + L-serine = D-glyceraldehyde 3-phosphate + L-tryptophan + H2O. The protein operates within amino-acid biosynthesis; L-tryptophan biosynthesis; L-tryptophan from chorismate: step 5/5. Its function is as follows. The beta subunit is responsible for the synthesis of L-tryptophan from indole and L-serine. The polypeptide is Tryptophan synthase beta chain (Acinetobacter baylyi (strain ATCC 33305 / BD413 / ADP1)).